The chain runs to 154 residues: Methylglyoxal synthase (154 aa).

An MGS-like domain is found at 6-154 (QSLPAKKNIA…KYLATRQIDI (149 aa)). Substrate-binding positions include His19, Lys23, 45 to 48 (TGTT), and 65 to 66 (SG). Asp71 acts as the Proton donor/acceptor in catalysis. A substrate-binding site is contributed by His98.

It belongs to the methylglyoxal synthase family.

It catalyses the reaction dihydroxyacetone phosphate = methylglyoxal + phosphate. Functionally, catalyzes the formation of methylglyoxal from dihydroxyacetone phosphate. This chain is Methylglyoxal synthase, found in Pseudoalteromonas translucida (strain TAC 125).